A 296-amino-acid chain; its full sequence is Bidirectional sugar transporter SWEET13 (296 aa).

Residues 1-9 (MAGLSLQHP) are Extracellular-facing. The helical transmembrane segment at 10-30 (WAFAFGLLGNLISFTTYLAPI) threads the bilayer. The 86-residue stretch at 13–98 (AFGLLGNLIS…VMYLAYAPKK (86 aa)) folds into the MtN3/slv 1 domain. Topologically, residues 31–45 (PTFYRIYKSKSTEGF) are cytoplasmic. A helical transmembrane segment spans residues 46-66 (QSVPYVVALFSAMLWIFYALI). Residues 67–71 (KSNEA) lie on the Extracellular side of the membrane. A helical transmembrane segment spans residues 72-92 (LLITINAAGCVIETIYIVMYL). At 93–105 (AYAPKKAKVFTTK) the chain is on the cytoplasmic side. Residues 106–126 (ILLLLNVGVFGVILLLTLLLS) form a helical membrane-spanning segment. Topologically, residues 127 to 133 (HGEQRVV) are extracellular. The helical transmembrane segment at 134–154 (SLGWVCVAFSVSVFVAPLSII) threads the bilayer. In terms of domain architecture, MtN3/slv 2 spans 134–217 (SLGWVCVAFS…MGLYVFYMNA (84 aa)). The Cytoplasmic segment spans residues 155 to 167 (KRVIQSRSVEYMP). Residues 168–188 (FSLSLTLTLSAVVWFLYGLLI) traverse the membrane as a helical segment. Over 189–192 (KDKY) the chain is Extracellular. A helical membrane pass occupies residues 193-213 (VALPNILGFTFGVVQMGLYVF). Over 214 to 296 (YMNATPVAGE…PPRAVEVAAV (83 aa)) the chain is Cytoplasmic.

This sequence belongs to the SWEET sugar transporter family. As to quaternary structure, forms homooligomers and/or heterooligomers.

The protein resides in the cell membrane. Functionally, mediates both low-affinity uptake and efflux of sugar across the plasma membrane. In terms of biological role, confers blight susceptibility. Confers TAL effector-mediated susceptibility to Xanthomonas oryzae pv. oryzae. This chain is Bidirectional sugar transporter SWEET13 (SWEET13), found in Oryza sativa subsp. japonica (Rice).